Reading from the N-terminus, the 389-residue chain is Probable transcription factor FL (389 aa).

2 disordered regions span residues 1–41 (MDPN…ANVP) and 140–226 (EHDM…HPFV). Residues 19 to 39 (PPAPAPVPPPPPPPPPPPPAN) show a composition bias toward pro residues. The span at 159–180 (VTGKKQAKKGSAARKGKKARRK) shows a compositional bias: basic residues. The Nuclear localization signal signature appears at 161–168 (GKKQAKKG). Positions 190–201 (QEDEMDCCDEDG) are enriched in acidic residues. 3 consecutive DNA-binding regions follow at residues 221–225 (REHPF), 290–297 (NKPKMRHY), and 361–364 (YVPT).

It belongs to the FLO/LFY family. Interacts with APO1. In very young panicle but not in mature florets, mature leaves, roots or apical meristems.

The protein resides in the nucleus. Its function is as follows. Probable transcription factor. Together with APO1, involved in the temporal regulation of meristem size and identity during both vegetative and reproductive developments through interaction with APO1. Promotes flowering. The chain is Probable transcription factor FL from Oryza sativa subsp. japonica (Rice).